The sequence spans 967 residues: Probable serine/threonine-protein kinase DDB_G0290621 (967 aa).

3 disordered regions span residues 65 to 122 (EDSD…KEKE), 215 to 251 (SSLSSSINNSSNNNSNISSSPLSSSPLTLSSSSSSSS), and 287 to 326 (QQQLPPPPPSQQQQQQQQQQQQQNNSMLQQSNNNNISPRT). A compositionally biased stretch (acidic residues) spans 66 to 94 (DSDEDDDDEEDEEDEEDSDEEEDDDVVED). Residues 95–122 (DNTKDIGKSRDSDKSIKGKEKGKEKEKE) show a composition bias toward basic and acidic residues. Residues 297-326 (QQQQQQQQQQQQQNNSMLQQSNNNNISPRT) are compositionally biased toward low complexity. In terms of domain architecture, Protein kinase spans 345–610 (FNDSNKIGEG…EIRSRLSEII (266 aa)). Residues 351 to 359 (IGEGGQCSI) and K368 contribute to the ATP site. D467 functions as the Proton acceptor in the catalytic mechanism. 3 disordered regions span residues 634–667 (DDSLINNNNNNNQNNNNQNNNNNNNNNNNNNNNN), 700–752 (STSN…NNNI), and 862–882 (TSSSSNKNNNNNNNDNNNPSN). Over residues 639–666 (NNNNNNNQNNNNQNNNNNNNNNNNNNNN) the composition is skewed to low complexity. Positions 863-882 (SSSSNKNNNNNNNDNNNPSN) are enriched in low complexity.

This sequence belongs to the protein kinase superfamily. TKL Ser/Thr protein kinase family.

It catalyses the reaction L-seryl-[protein] + ATP = O-phospho-L-seryl-[protein] + ADP + H(+). It carries out the reaction L-threonyl-[protein] + ATP = O-phospho-L-threonyl-[protein] + ADP + H(+). The polypeptide is Probable serine/threonine-protein kinase DDB_G0290621 (Dictyostelium discoideum (Social amoeba)).